We begin with the raw amino-acid sequence, 270 residues long: 3-phenylpropionate-dihydrodiol/cinnamic acid-dihydrodiol dehydrogenase (270 aa).

Residue Phe10 to Ala34 participates in NAD(+) binding. Substrate is bound at residue Ser143. Tyr156 functions as the Proton acceptor in the catalytic mechanism.

This sequence belongs to the short-chain dehydrogenases/reductases (SDR) family.

It catalyses the reaction 3-(cis-5,6-dihydroxycyclohexa-1,3-dien-1-yl)propanoate + NAD(+) = 3-(2,3-dihydroxyphenyl)propanoate + NADH + H(+). It carries out the reaction (2E)-3-(cis-5,6-dihydroxycyclohexa-1,3-dien-1-yl)prop-2-enoate + NAD(+) = (2E)-3-(2,3-dihydroxyphenyl)prop-2-enoate + NADH + H(+). The protein operates within aromatic compound metabolism; 3-phenylpropanoate degradation. In terms of biological role, converts 3-phenylpropionate-dihydrodiol (PP-dihydrodiol) and cinnamic acid-dihydrodiol (CI-dihydrodiol) into 3-(2,3-dihydroxylphenyl)propanoic acid (DHPP) and 2,3-dihydroxicinnamic acid (DHCI), respectively. This is 3-phenylpropionate-dihydrodiol/cinnamic acid-dihydrodiol dehydrogenase from Escherichia coli O8 (strain IAI1).